Reading from the N-terminus, the 394-residue chain is MDSQGKKVVVCDNGTGFVKCGYAGSNFPEHIFPALVGRPIIRSTAKVGNIEIKDLMVGDEASELRSMLEVNYPMENGIVRNWDDMKHLWDYTFGPEKLNIDSRNCKILLTEPPMNPTKNREKIIEVMFETYQFSGVYIAIQAVLTLYAQGLLTGVVVDSGDGVTHICPVYEGFSLPHLTRRLDIAGRDITRYLIKLLLLRGYAFNHSADFETVRMMKEKLCYVGYNIEQEQKLALETTVLVESYTLPDGRVIKVGGERFGAPEALFQPHLINVEGVGVAELLFNTIQAADIDTRAEFYKHIVLSGGSTMYPGLPSRLERELKQLYLERVLKGDVDKLSKFKIRIEDPPRRKHMVFLGGAVLADIMKDKDNFWMTREEYQEKGTRVLEKLGVTVR.

ATP is bound by residues 160–162, 214–218, and 305–310; these read GDG, RMMKE, and GGSTMY.

This sequence belongs to the actin family. ARP2 subfamily. In terms of assembly, component of the Arp2/3 complex composed of actr2/arp2, actr3/arp3, arpc1b, arpc2, arpc3, arpc4 and arpc5.

The protein localises to the cytoplasm. It localises to the cytoskeleton. It is found in the cell projection. Its subcellular location is the nucleus. In terms of biological role, ATP-binding component of the Arp2/3 complex, a multiprotein complex that mediates actin polymerization upon stimulation by nucleation-promoting factor (NPF). The Arp2/3 complex mediates the formation of branched actin networks in the cytoplasm, providing the force for cell motility. Seems to contact the pointed end of the daughter actin filament. In addition to its role in the cytoplasmic cytoskeleton, the Arp2/3 complex also promotes actin polymerization in the nucleus, thereby regulating gene transcription and repair of damaged DNA. The Arp2/3 complex promotes homologous recombination (HR) repair in response to DNA damage by promoting nuclear actin polymerization, leading to drive motility of double-strand breaks (DSBs). This is Actin-related protein 2-A (actr2a) from Danio rerio (Zebrafish).